The sequence spans 560 residues: Factor VII-activating protease (560 aa).

The signal sequence occupies residues 1 to 23; it reads MFARMSDLHVLLLMALVGKTACG. An N-linked (GlcNAc...) asparagine glycan is attached at asparagine 54. EGF-like domains are found at residues 73-109, 111-148, and 150-188; these read QADPCQPNPCEHGGDCLVHGSTFTCSCLAPFSGNKCQ, VQNTCKDNPCGRGQCLITQSPPYYRCVCKHPYTGPSCS, and VVPVCRPNPCQNGATCSRHKRRSKFTCACPDQFKGKFCE. Intrachain disulfides connect cysteine 77-cysteine 88, cysteine 82-cysteine 97, cysteine 99-cysteine 108, cysteine 115-cysteine 125, cysteine 120-cysteine 136, cysteine 138-cysteine 147, cysteine 154-cysteine 165, cysteine 159-cysteine 176, cysteine 178-cysteine 187, cysteine 194-cysteine 276, cysteine 215-cysteine 257, cysteine 246-cysteine 271, cysteine 301-cysteine 435, cysteine 347-cysteine 363, cysteine 355-cysteine 424, cysteine 447-cysteine 515, cysteine 477-cysteine 493, and cysteine 505-cysteine 533. Residues 193 to 276 enclose the Kringle domain; that stretch reads DCYVGDGYSY…KWEYCDVSAC (84 aa). N-linked (GlcNAc...) asparagine glycosylation is present at asparagine 207. One can recognise a Peptidase S1 domain in the interval 314 to 555; the sequence is IYGGFKSTAG…FLNWIKATIK (242 aa). Catalysis depends on charge relay system residues histidine 362 and aspartate 411. Serine 509 (charge relay system) is an active-site residue.

Belongs to the peptidase S1 family. As to quaternary structure, heterodimer; disulfide-linked. Heterodimer of a 50 kDa heavy and a 27 kDa light chain linked by a disulfide bond. Proteolytic cleavage at Gly-23 or Met-27 can give rise to the 50 kDa heavy chain (HC) and cleavage at Arg-313 or Lys-319 can give rise to the 27 kDa light chain (LC). The HC can undergo further proteolytic cleavage giving rise to a 26 kDa fragment. The LC can undergo further proteolytic cleavage at Arg-313 leading to a 17-kDa fragment and at Arg-480 leading to a 8-kDa fragment. Ubiquitously expressed.

It localises to the secreted. Functionally, cleaves the alpha-chain at multiple sites and the beta-chain between 'Lys-53' and 'Lys-54' but not the gamma-chain of fibrinogen and therefore does not initiate the formation of the fibrin clot and does not cause the fibrinolysis directly. It does not cleave (activate) prothrombin and plasminogen but converts the inactive single chain urinary plasminogen activator (pro-urokinase) to the active two chain form. Activates coagulation factor VII. May function as a tumor suppressor negatively regulating cell proliferation and cell migration. The polypeptide is Factor VII-activating protease (Homo sapiens (Human)).